The chain runs to 804 residues: Leucine--tRNA ligase (804 aa).

Positions 40-51 (PYPSGAGLHVGH) match the 'HIGH' region motif. The 'KMSKS' region motif lies at 576 to 580 (KMSKS). K579 contributes to the ATP binding site.

This sequence belongs to the class-I aminoacyl-tRNA synthetase family.

It is found in the cytoplasm. It catalyses the reaction tRNA(Leu) + L-leucine + ATP = L-leucyl-tRNA(Leu) + AMP + diphosphate. In Staphylococcus saprophyticus subsp. saprophyticus (strain ATCC 15305 / DSM 20229 / NCIMB 8711 / NCTC 7292 / S-41), this protein is Leucine--tRNA ligase.